Here is a 480-residue protein sequence, read N- to C-terminus: MPSVKIGIIGAGSAVFSLRLVSDLCKTPGLSGSTVTLMDIDEERLDAILTIAKKYVEEVGADLKFEKTMNLDDVIIDADFVINTAMVGGHTYLEKVRQIGEKYGYYRGIDAQEFNMVSDYYTFSNYNQLKYFVDIARKIEKLSPKAWYLQAANPIFEGTTLVTRTVPIKAVGFCHGHYGVMEIVEKLGLEEEKVDWQVAGVNHGIWLNRFRYNGGNAYPLLDKWIEEKSKDWKPENPFNDQLSPAAIDMYRFYGVMPIGDTVRNSSWRYHRDLETKKKWYGEPWGGADSEIGWKWYQDTLGKVTEITKKVAKFIKENPSVRLSDLGSVLGKDLSEKQFVLEVEKILDPERKSGEQHIPFIDALLNDNKARFVVNIPNKGIIHGIDDDVVVEVPALVDKNGIHPEKIEPPLPDRVVKYYLRPRIMRMEMALEAFLTGDIRIIKELLYRDPRTKSDEQVEKVIEEILALPENEEMRKHYLKR.

Position 4–70 (4–70 (VKIGIIGAGS…ADLKFEKTMN (67 aa))) interacts with NAD(+). Substrate contacts are provided by Asp-119 and Asn-153. Mn(2+) is bound at residue Cys-174. The Proton donor role is filled by His-175. A Mn(2+)-binding site is contributed by His-203. Catalysis depends on Asp-260, which acts as the Proton acceptor.

This sequence belongs to the glycosyl hydrolase 4 family. Homodimer. Requires NAD(+) as cofactor. The cofactor is Mn(2+). It depends on Co(2+) as a cofactor. Ni(2+) is required as a cofactor.

The catalysed reaction is Hydrolysis of terminal, non-reducing (1-&gt;4)-linked alpha-D-glucose residues with release of alpha-D-glucose.. With respect to regulation, inhibited by Hg(2+) ion and EDTA. Functionally, alpha-glycosidase with a very broad specificity. Hydrolyzes maltose and other small maltooligosaccharides but is inactive against the polymeric substrate starch. AglA is not specific with respect to the configuration at the C-4 position of its substrates because glycosidic derivatives of D-galactose are also hydrolyzed. Does not cleave beta-glycosidic bonds. The sequence is that of Alpha-glucosidase (aglA) from Thermotoga maritima (strain ATCC 43589 / DSM 3109 / JCM 10099 / NBRC 100826 / MSB8).